Here is a 747-residue protein sequence, read N- to C-terminus: Ubiquitin carboxyl-terminal hydrolase 13 (747 aa).

A USP domain is found at 140-668 (FGYENFGNTC…TAYVLFYKAM (529 aa)). The active-site Nucleophile is cysteine 149. 2 disordered regions span residues 172–305 (PKKS…RPPD) and 318–367 (YENP…RKKS). Positions 174 to 183 (KSRESDQPRK) are enriched in basic and acidic residues. A Phosphoserine modification is found at serine 198. Residues 225-235 (PVNSVNSNTAG) are compositionally biased toward polar residues. Residues 251–260 (HVQDNNKKEG) show a composition bias toward basic and acidic residues. Positions 319–343 (ENPSRGSSNSNNLDLKGESNSSLST) are enriched in polar residues. Residue histidine 619 is the Proton acceptor of the active site.

It belongs to the peptidase C19 family.

It carries out the reaction Thiol-dependent hydrolysis of ester, thioester, amide, peptide and isopeptide bonds formed by the C-terminal Gly of ubiquitin (a 76-residue protein attached to proteins as an intracellular targeting signal).. In Saccharomyces cerevisiae (strain ATCC 204508 / S288c) (Baker's yeast), this protein is Ubiquitin carboxyl-terminal hydrolase 13 (UBP13).